Reading from the N-terminus, the 1098-residue chain is MSQPNSQGQSNLAKFAFNIYGTLSTNSSTPQSHEISPSSSLGSSRSNKQTNQYSSQETNNNRLSYYCEKEIMSLSQLNYPLSIGGYNGDLQHHVVIGGKNYLRLLCVSETQQRIISDINLLESKSIYNSRATNKLINVNTIKTYADTIAAGLSNGVVLIYRVSPNGQSKVVGKYSDHSRTINSLDFIDSENQLLSGSQDGTIKLWDLRSSSTKPVMTIQANLHSDPIRACQYSRHSAVRNKICVLSVHDSGALCKFDLRTKNGGKVYSPEKKWNLHTGPVLSLHIHPEKEYVVTGGRDKRISVFNYGDGQSRNTPDSLINTYGPVVKVRWSTYANTKEIVEEFEENQQPNPNPLYNYDIACSYLNDDPTIAIYNLGRKFIPKQIIHSKKPVQNFIWAQNNSKSRKIWTLSKPNSFNSYNLYGLDDSDVSRPIEDLSNVAMTWDNNNDFCAVSQARYDYDLESFGNAINETYEDNYDTERNCSLDNEEFVHSQANSLTASPIEKPQLTRSMTYNPVQSFSTFSPAPVARTATGFLQNEPVTPSSSSSIPNMHLSSSRPKLTRNTSQTTQDSSSSQLSSVIPPPSSSQTYSSPQYKRNQSSRCLNTPAYVIPVSIPVPSNDEYVFQKLSSESLVNIPDGFTLVDVCLINASVAASVNNNRTSQVWKLLAVSIQEEFESGSKLRRILGPETETVSKIPQEVHESLAKTNEALSSDIAKSNSVSSVLGNFVESFKSTSTSGSQFGKQNDKDDRKLQNKNSSGNLMDMINKASRNSSFSTTSFRLKEQERREHELRNTQNFRDENEKVSTHSKSAPISISSHPEDLDDENMSATNSAGLKSSPPSVGVSIPSTRTFSSSLASSPKSIRIMNGVNSNVARSQPSPPVQTWLKQRNFDVSNGVTMMGTSGLSLALKRNKTNEEGCEFVKVWKFKSLLRKSLDYAALQGDIIFCSTVALLFYDIVPDVISQFECLEWLSIYIEILQRKRLFVNAINVIKCATADIQEKLQKLYCSDLSLRFYCSRCQALLVNDKSKFSGKGEFGYWYCDECSRLQSQCVYCNEPCKGLAVTVGLKCGHQGHFGCLKEWFIEDQNTECPGGCDYQVI.

Residues 26-57 (NSSTPQSHEISPSSSLGSSRSNKQTNQYSSQE) form a disordered region. The span at 32 to 46 (SHEISPSSSLGSSRS) shows a compositional bias: low complexity. Residues 47-57 (NKQTNQYSSQE) show a composition bias toward polar residues. WD repeat units follow at residues 131–170 (ATNK…QSKV), 176–215 (DHSR…TKPV), 222–266 (LHSD…GGKV), 275–314 (LHTG…SRNT), 367–417 (DPTI…SFNS), and 432–473 (IEDL…TYED). Residues 535–562 (QNEPVTPSSSSSIPNMHLSSSRPKLTRN) are compositionally biased toward polar residues. The interval 535-597 (QNEPVTPSSS…YSSPQYKRNQ (63 aa)) is disordered. Over residues 563–593 (TSQTTQDSSSSQLSSVIPPPSSSQTYSSPQY) the composition is skewed to low complexity. Residues 635–673 (PDGFTLVDVCLINASVAASVNNNRTSQVWKLLAVSIQEE) form a WD 7 repeat. The segment covering 731–742 (KSTSTSGSQFGK) has biased composition (polar residues). A disordered region spans residues 731-843 (KSTSTSGSQF…LKSSPPSVGV (113 aa)). Residues 768–778 (SRNSSFSTTSF) are compositionally biased toward low complexity. Residues 779–804 (RLKEQERREHELRNTQNFRDENEKVS) show a composition bias toward basic and acidic residues. Positions 806 to 816 (HSKSAPISISS) are enriched in polar residues. The WD 8 repeat unit spans residues 891–934 (DVSNGVTMMGTSGLSLALKRNKTNEEGCEFVKVWKFKSLLRKSL). An RING-type; degenerate zinc finger spans residues 1050 to 1093 (CVYCNEPCKGLAVTVGLKCGHQGHFGCLKEWFIEDQNTECPGGC).

Belongs to the WD repeat RTC1 family.

It localises to the vacuole. In terms of biological role, may be involved in a process influencing telomere capping. The protein is Restriction of telomere capping protein 1 (RTC1) of Candida dubliniensis (strain CD36 / ATCC MYA-646 / CBS 7987 / NCPF 3949 / NRRL Y-17841) (Yeast).